The sequence spans 247 residues: Carboxy-S-adenosyl-L-methionine synthase (247 aa).

Residues tyrosine 39, 64-66, 89-90, 117-118, asparagine 132, and arginine 199 each bind S-adenosyl-L-methionine; these read GCS, DN, and DI.

Belongs to the class I-like SAM-binding methyltransferase superfamily. Cx-SAM synthase family. Homodimer.

It catalyses the reaction prephenate + S-adenosyl-L-methionine = carboxy-S-adenosyl-L-methionine + 3-phenylpyruvate + H2O. Catalyzes the conversion of S-adenosyl-L-methionine (SAM) to carboxy-S-adenosyl-L-methionine (Cx-SAM). The polypeptide is Carboxy-S-adenosyl-L-methionine synthase (Escherichia fergusonii (strain ATCC 35469 / DSM 13698 / CCUG 18766 / IAM 14443 / JCM 21226 / LMG 7866 / NBRC 102419 / NCTC 12128 / CDC 0568-73)).